The chain runs to 169 residues: Photosystem I assembly protein Ycf3 (169 aa).

TPR repeat units lie at residues 35–68, 72–105, and 120–153; these read AFTY…ETDP, SYIL…NPSL, and GEQA…APGN.

The protein belongs to the Ycf3 family.

The protein localises to the plastid. The protein resides in the chloroplast thylakoid membrane. In terms of biological role, essential for the assembly of the photosystem I (PSI) complex. May act as a chaperone-like factor to guide the assembly of the PSI subunits. The sequence is that of Photosystem I assembly protein Ycf3 from Pinus koraiensis (Korean pine).